Reading from the N-terminus, the 312-residue chain is Bark storage protein A (312 aa).

The signal sequence occupies residues 1–24 (MPQQSMQASLIDPIAEIERSNCKI). An N-linked (GlcNAc...) asparagine glycan is attached at asparagine 70.

The protein to wound-inducible poplar endochitinases. As to quaternary structure, monomer. Bark.

Its function is as follows. May play a role in nitrogen storage. This Populus deltoides (Eastern poplar) protein is Bark storage protein A (BSPA).